The primary structure comprises 464 residues: Probable multidrug resistance protein NorM (464 aa).

A run of 12 helical transmembrane segments spans residues 22 to 42 (LIKL…FGMA), 64 to 84 (VFWV…VTIA), 104 to 124 (FLAI…DVLI), 142 to 162 (LKVI…SAML), 172 to 192 (MIVT…MIFG), 204 to 224 (AAVA…YVIF), 258 to 278 (FVFS…GAEA), 288 to 308 (VESL…TLVG), 326 to 346 (GWIL…LFPE), 358 to 378 (IIEI…FLAI), 384 to 404 (GALR…ISIW), and 410 to 430 (VAFV…IGMI).

Belongs to the multi antimicrobial extrusion (MATE) (TC 2.A.66.1) family.

The protein resides in the cell membrane. Multidrug efflux pump. This is Probable multidrug resistance protein NorM (norM) from Thermotoga maritima (strain ATCC 43589 / DSM 3109 / JCM 10099 / NBRC 100826 / MSB8).